The chain runs to 466 residues: D-inositol 3-phosphate glycosyltransferase (466 aa).

The span at 1–12 shows a compositional bias: low complexity; sequence MRPMRAGAGAAG. A disordered region spans residues 1 to 22; it reads MRPMRAGAGAAGESCKDDGVRP. Histidine 43 contacts 1D-myo-inositol 3-phosphate. Residues 49–50 and glycine 57 contribute to the UDP-N-acetyl-alpha-D-glucosamine site; that span reads QP. 1D-myo-inositol 3-phosphate-binding positions include 54–59, lysine 112, tyrosine 145, threonine 169, and arginine 189; that span reads DAGGMN. UDP-N-acetyl-alpha-D-glucosamine-binding residues include arginine 263, lysine 268, and glutamine 321. Mg(2+) contacts are provided by phenylalanine 330, histidine 331, and valine 333. Residues glutamate 343 and glutamate 351 each coordinate UDP-N-acetyl-alpha-D-glucosamine. Threonine 357 contributes to the Mg(2+) binding site. The interval 446 to 466 is disordered; sequence VRDPVAARKPRRWTARRGVGA.

This sequence belongs to the glycosyltransferase group 1 family. MshA subfamily. As to quaternary structure, homodimer.

It catalyses the reaction 1D-myo-inositol 3-phosphate + UDP-N-acetyl-alpha-D-glucosamine = 1D-myo-inositol 2-acetamido-2-deoxy-alpha-D-glucopyranoside 3-phosphate + UDP + H(+). Catalyzes the transfer of a N-acetyl-glucosamine moiety to 1D-myo-inositol 3-phosphate to produce 1D-myo-inositol 2-acetamido-2-deoxy-glucopyranoside 3-phosphate in the mycothiol biosynthesis pathway. In Mycobacterium marinum (strain ATCC BAA-535 / M), this protein is D-inositol 3-phosphate glycosyltransferase.